We begin with the raw amino-acid sequence, 424 residues long: UDP-N-acetylglucosamine 1-carboxyvinyltransferase (424 aa).

Phosphoenolpyruvate is bound at residue 22-23 (KN). Residue Arg93 coordinates UDP-N-acetyl-alpha-D-glucosamine. The Proton donor role is filled by Cys117. Cys117 bears the 2-(S-cysteinyl)pyruvic acid O-phosphothioketal mark. UDP-N-acetyl-alpha-D-glucosamine contacts are provided by residues 122-126 (RPVDL), 162-165 (KVSV), Asp307, and Ile329.

Belongs to the EPSP synthase family. MurA subfamily.

The protein localises to the cytoplasm. The enzyme catalyses phosphoenolpyruvate + UDP-N-acetyl-alpha-D-glucosamine = UDP-N-acetyl-3-O-(1-carboxyvinyl)-alpha-D-glucosamine + phosphate. It participates in cell wall biogenesis; peptidoglycan biosynthesis. In terms of biological role, cell wall formation. Adds enolpyruvyl to UDP-N-acetylglucosamine. This is UDP-N-acetylglucosamine 1-carboxyvinyltransferase from Haemophilus influenzae (strain 86-028NP).